The sequence spans 355 residues: Green-sensitive opsin (355 aa).

Residues Met-1–Lys-36 are Extracellular-facing. Residues Asn-2 and Asn-15 are each glycosylated (N-linked (GlcNAc...) asparagine). A helical membrane pass occupies residues Tyr-37 to Val-61. At Thr-62–Asn-73 the chain is on the cytoplasmic side. Residues Tyr-74–Trp-99 form a helical membrane-spanning segment. Over Asn-100–Glu-113 the chain is Extracellular. A disulfide bond links Cys-110 and Cys-187. A helical membrane pass occupies residues Gly-114–Ile-133. At Glu-134 to His-152 the chain is on the cytoplasmic side. The helical transmembrane segment at Ala-153 to Ser-176 threads the bilayer. Residues Arg-177–Ser-202 lie on the Extracellular side of the membrane. The helical transmembrane segment at Tyr-203 to Val-230 threads the bilayer. Residues Arg-231–Arg-252 lie on the Cytoplasmic side of the membrane. Residues Met-253 to Phe-276 traverse the membrane as a helical segment. Over Thr-277 to Thr-284 the chain is Extracellular. Residues Ala-285–Met-309 form a helical membrane-spanning segment. Lys-296 is modified (N6-(retinylidene)lysine). The Cytoplasmic segment spans residues Asn-310–Ala-355.

It belongs to the G-protein coupled receptor 1 family. Opsin subfamily. In terms of processing, phosphorylated on some or all of the serine and threonine residues present in the C-terminal region. As to expression, the color pigments are found in the cone photoreceptor cells.

The protein localises to the membrane. In terms of biological role, visual pigments are the light-absorbing molecules that mediate vision. They consist of an apoprotein, opsin, covalently linked to cis-retinal. The protein is Green-sensitive opsin (PRA1) of Gallus gallus (Chicken).